The following is a 612-amino-acid chain: Arginine--tRNA ligase (612 aa).

A 'HIGH' region motif is present at residues 152–162; the sequence is PNIAKEMHVGH.

Belongs to the class-I aminoacyl-tRNA synthetase family. Monomer.

It localises to the cytoplasm. It catalyses the reaction tRNA(Arg) + L-arginine + ATP = L-arginyl-tRNA(Arg) + AMP + diphosphate. This is Arginine--tRNA ligase from Prochlorococcus marinus (strain MIT 9313).